Here is a 321-residue protein sequence, read N- to C-terminus: Serine protease 52 (321 aa).

A signal peptide spans methionine 1–alanine 27. The Peptidase S1 domain occupies isoleucine 56–alanine 287. A disulfide bond links cysteine 81 and cysteine 97. Active-site charge relay system residues include histidine 96 and aspartate 142. Residue asparagine 153 is glycosylated (N-linked (GlcNAc...) asparagine). 3 disulfide bridges follow: cysteine 175–cysteine 242, cysteine 208–cysteine 221, and cysteine 232–cysteine 263. Serine 236 acts as the Charge relay system in catalysis. A helical transmembrane segment spans residues alanine 300–leucine 320.

The protein belongs to the peptidase S1 family.

The protein localises to the membrane. Its function is as follows. Probable serine protease. The protein is Serine protease 52 (Prss52) of Mus musculus (Mouse).